The primary structure comprises 95 residues: Transcription and mRNA export factor ENY2-1 (95 aa).

The protein belongs to the ENY2 family. In terms of assembly, component of the nuclear pore complex (NPC)-associated TREX-2 complex (transcription and export complex 2). Component of the SAGA transcription coactivator-HAT complex. Within the SAGA complex, participates in a subcomplex of SAGA called the DUB module (deubiquitination module).

It localises to the nucleus. It is found in the nucleoplasm. Involved in mRNA export coupled transcription activation by association with both the TREX-2 and the SAGA complexes. The transcription regulatory histone acetylation (HAT) complex SAGA is a multiprotein complex that activates transcription by remodeling chromatin and mediating histone acetylation and deubiquitination. Within the SAGA complex, participates in a subcomplex that specifically deubiquitinates histones. The SAGA complex is recruited to specific gene promoters by activators, where it is required for transcription. The TREX-2 complex functions in docking export-competent ribonucleoprotein particles (mRNPs) to the nuclear entrance of the nuclear pore complex (nuclear basket). TREX-2 participates in mRNA export and accurate chromatin positioning in the nucleus by tethering genes to the nuclear periphery. In Salmo salar (Atlantic salmon), this protein is Transcription and mRNA export factor ENY2-1 (eny2-1).